Reading from the N-terminus, the 418-residue chain is Probable serine hydroxymethyltransferase (418 aa).

Residues leucine 118 and 122–124 (GHL) contribute to the (6S)-5,6,7,8-tetrahydrofolate site. The residue at position 226 (lysine 226) is an N6-(pyridoxal phosphate)lysine. 351 to 353 (SPF) is a (6S)-5,6,7,8-tetrahydrofolate binding site.

It belongs to the SHMT family. In terms of assembly, homodimer. Requires pyridoxal 5'-phosphate as cofactor.

It is found in the cytoplasm. It catalyses the reaction (6R)-5,10-methylene-5,6,7,8-tetrahydrofolate + glycine + H2O = (6S)-5,6,7,8-tetrahydrofolate + L-serine. Its pathway is one-carbon metabolism; tetrahydrofolate interconversion. Its function is as follows. Catalyzes the reversible interconversion of serine and glycine with tetrahydrofolate (THF) serving as the one-carbon carrier. This reaction serves as the major source of one-carbon groups required for the biosynthesis of purines, thymidylate, methionine, and other important biomolecules. This Mesomycoplasma hyopneumoniae (strain 7448) (Mycoplasma hyopneumoniae) protein is Probable serine hydroxymethyltransferase.